We begin with the raw amino-acid sequence, 497 residues long: Acetyl-coenzyme A carboxylase carboxyl transferase subunit beta, chloroplastic (497 aa).

A disordered region spans residues 30 to 50; that stretch reads GPVENTTVNEDPTRNDTDKNI. A compositionally biased stretch (basic and acidic residues) spans 40–50; that stretch reads DPTRNDTDKNI. The 268-residue stretch at 230–497 folds into the CoA carboxyltransferase N-terminal domain; that stretch reads VQCECENCYG…FFPLNQNSIK (268 aa). Residues Cys-232, Cys-237, Cys-253, and Cys-256 each contribute to the Zn(2+) site. The C4-type zinc-finger motif lies at 232–256; it reads CECENCYGVNYKKSLNSKMNICEQC.

Belongs to the AccD/PCCB family. As to quaternary structure, acetyl-CoA carboxylase is a heterohexamer composed of biotin carboxyl carrier protein, biotin carboxylase and 2 subunits each of ACCase subunit alpha and ACCase plastid-coded subunit beta (accD). Requires Zn(2+) as cofactor.

The protein resides in the plastid. Its subcellular location is the chloroplast stroma. The enzyme catalyses N(6)-carboxybiotinyl-L-lysyl-[protein] + acetyl-CoA = N(6)-biotinyl-L-lysyl-[protein] + malonyl-CoA. It functions in the pathway lipid metabolism; malonyl-CoA biosynthesis; malonyl-CoA from acetyl-CoA: step 1/1. Functionally, component of the acetyl coenzyme A carboxylase (ACC) complex. Biotin carboxylase (BC) catalyzes the carboxylation of biotin on its carrier protein (BCCP) and then the CO(2) group is transferred by the transcarboxylase to acetyl-CoA to form malonyl-CoA. The polypeptide is Acetyl-coenzyme A carboxylase carboxyl transferase subunit beta, chloroplastic (Gossypium hirsutum (Upland cotton)).